We begin with the raw amino-acid sequence, 383 residues long: Histidinol-phosphate aminotransferase (383 aa).

Residue Lys-240 is modified to N6-(pyridoxal phosphate)lysine.

It belongs to the class-II pyridoxal-phosphate-dependent aminotransferase family. Histidinol-phosphate aminotransferase subfamily. Homodimer. The cofactor is pyridoxal 5'-phosphate.

The enzyme catalyses L-histidinol phosphate + 2-oxoglutarate = 3-(imidazol-4-yl)-2-oxopropyl phosphate + L-glutamate. It functions in the pathway amino-acid biosynthesis; L-histidine biosynthesis; L-histidine from 5-phospho-alpha-D-ribose 1-diphosphate: step 7/9. This is Histidinol-phosphate aminotransferase from Oleidesulfovibrio alaskensis (strain ATCC BAA-1058 / DSM 17464 / G20) (Desulfovibrio alaskensis).